We begin with the raw amino-acid sequence, 1058 residues long: Kinesin-like protein KIN-5D (1058 aa).

The tract at residues 1 to 43 (MDSIQQRRGGIVSLSPAQTPRSSDKSARESRSSESNSTNRNDK) is disordered. The segment covering 22-32 (SSDKSARESRS) has biased composition (basic and acidic residues). Residues 48–390 (NVQVILRCRP…LDYAHRAKNI (343 aa)) form the Kinesin motor domain. 134-141 (GQTGTGKT) serves as a coordination point for ATP. A coiled-coil region spans residues 438 to 517 (QEEAEKKAMA…QANATIKEKE (80 aa)).

Belongs to the TRAFAC class myosin-kinesin ATPase superfamily. Kinesin family. KIN-5/BimC subfamily.

It localises to the cytoplasm. The protein localises to the cytoskeleton. It is found in the spindle. In terms of biological role, responsible for microtubule translocation. May be important for the organization of phragmoplast-specific arrays of microtubules. Plays an essential role in stabilizing the mitotic spindle. Required during mitotic cytokinesis. The sequence is that of Kinesin-like protein KIN-5D from Arabidopsis thaliana (Mouse-ear cress).